Consider the following 282-residue polypeptide: V-set domain-containing T-cell activation inhibitor 1 (282 aa).

Positions 1-24 (MASLGQILFWSIISIIIILAGAIA) are cleaved as a signal peptide. Over 25-259 (LIIGFGISGR…HLQLLNSKAS (235 aa)) the chain is Extracellular. Ig-like V-type domains follow at residues 35-146 (HSIT…LEYK) and 153-241 (PEVN…IKVT). 2 disulfide bridges follow: Cys-56-Cys-130 and Cys-168-Cys-225. An N-linked (GlcNAc...) asparagine glycan is attached at Asn-216. Residues 260-280 (LCVSSFFAISWALLPLSPYLM) traverse the membrane as a helical segment. Residues 281–282 (LK) are Cytoplasmic-facing.

The protein belongs to the immunoglobulin superfamily. BTN/MOG family. In terms of processing, N-glycosylated. In terms of tissue distribution, overexpressed in breast, ovarian, endometrial, renal cell (RCC) and non-small-cell lung cancers (NSCLC). Expressed on activated T- and B-cells, monocytes and dendritic cells, but not expressed in most normal tissues (at protein level). Widely expressed, including in kidney, liver, lung, ovary, placenta, spleen and testis.

It is found in the cell membrane. Its function is as follows. Negatively regulates T-cell-mediated immune response by inhibiting T-cell activation, proliferation, cytokine production and development of cytotoxicity. When expressed on the cell surface of tumor macrophages, plays an important role, together with regulatory T-cells (Treg), in the suppression of tumor-associated antigen-specific T-cell immunity. Involved in promoting epithelial cell transformation. This chain is V-set domain-containing T-cell activation inhibitor 1, found in Homo sapiens (Human).